A 425-amino-acid chain; its full sequence is Serine--tRNA ligase (425 aa).

233 to 235 contacts L-serine; the sequence is TAE. 264-266 serves as a coordination point for ATP; the sequence is RRE. Glutamate 287 lines the L-serine pocket. 351–354 provides a ligand contact to ATP; it reads EISS. L-serine is bound at residue serine 387.

The protein belongs to the class-II aminoacyl-tRNA synthetase family. Type-1 seryl-tRNA synthetase subfamily. In terms of assembly, homodimer. The tRNA molecule binds across the dimer.

The protein localises to the cytoplasm. It catalyses the reaction tRNA(Ser) + L-serine + ATP = L-seryl-tRNA(Ser) + AMP + diphosphate + H(+). The enzyme catalyses tRNA(Sec) + L-serine + ATP = L-seryl-tRNA(Sec) + AMP + diphosphate + H(+). The protein operates within aminoacyl-tRNA biosynthesis; selenocysteinyl-tRNA(Sec) biosynthesis; L-seryl-tRNA(Sec) from L-serine and tRNA(Sec): step 1/1. In terms of biological role, catalyzes the attachment of serine to tRNA(Ser). Is also able to aminoacylate tRNA(Sec) with serine, to form the misacylated tRNA L-seryl-tRNA(Sec), which will be further converted into selenocysteinyl-tRNA(Sec). The protein is Serine--tRNA ligase of Thermotoga sp. (strain RQ2).